The chain runs to 308 residues: D-alanine--D-alanine ligase (308 aa).

In terms of domain architecture, ATP-grasp spans 102–302; the sequence is KTVAKSAGIP…FGALLSWMVE (201 aa). Position 128–183 (128–183) interacts with ATP; sequence PMEPPYVVKPVAEGSSFGVVIVREGQSHPPQVLGSAEWGYGERVMVERYIPGRELT. 3 residues coordinate Mg(2+): Asp-252, Glu-269, and Asn-271.

This sequence belongs to the D-alanine--D-alanine ligase family. Requires Mg(2+) as cofactor. Mn(2+) serves as cofactor.

Its subcellular location is the cytoplasm. The catalysed reaction is 2 D-alanine + ATP = D-alanyl-D-alanine + ADP + phosphate + H(+). The protein operates within cell wall biogenesis; peptidoglycan biosynthesis. Functionally, cell wall formation. The polypeptide is D-alanine--D-alanine ligase (Chelativorans sp. (strain BNC1)).